Consider the following 224-residue polypeptide: UPF0758 protein LCA_0852 (224 aa).

An MPN domain is found at 100–222; that stretch reads VVASSQMVGQ…YLSLREEGYL (123 aa). Zn(2+)-binding residues include H171, H173, and D184. The JAMM motif motif lies at 171–184; the sequence is HNHPSGQLAPSTQD.

This sequence belongs to the UPF0758 family.

The chain is UPF0758 protein LCA_0852 from Latilactobacillus sakei subsp. sakei (strain 23K) (Lactobacillus sakei subsp. sakei).